We begin with the raw amino-acid sequence, 361 residues long: S-adenosylmethionine:tRNA ribosyltransferase-isomerase (361 aa).

The protein belongs to the QueA family. As to quaternary structure, monomer.

It localises to the cytoplasm. It carries out the reaction 7-aminomethyl-7-carbaguanosine(34) in tRNA + S-adenosyl-L-methionine = epoxyqueuosine(34) in tRNA + adenine + L-methionine + 2 H(+). Its pathway is tRNA modification; tRNA-queuosine biosynthesis. Transfers and isomerizes the ribose moiety from AdoMet to the 7-aminomethyl group of 7-deazaguanine (preQ1-tRNA) to give epoxyqueuosine (oQ-tRNA). The chain is S-adenosylmethionine:tRNA ribosyltransferase-isomerase from Mesorhizobium japonicum (strain LMG 29417 / CECT 9101 / MAFF 303099) (Mesorhizobium loti (strain MAFF 303099)).